Here is a 640-residue protein sequence, read N- to C-terminus: 1-deoxy-D-xylulose-5-phosphate synthase (640 aa).

Thiamine diphosphate-binding positions include His77 and 118–120; that span reads AHA. Asp149 serves as a coordination point for Mg(2+). Thiamine diphosphate is bound by residues 150–151, Asn178, Tyr287, and Glu369; that span reads GS. Residue Asn178 participates in Mg(2+) binding.

This sequence belongs to the transketolase family. DXPS subfamily. Homodimer. Mg(2+) serves as cofactor. It depends on thiamine diphosphate as a cofactor.

The enzyme catalyses D-glyceraldehyde 3-phosphate + pyruvate + H(+) = 1-deoxy-D-xylulose 5-phosphate + CO2. It participates in metabolic intermediate biosynthesis; 1-deoxy-D-xylulose 5-phosphate biosynthesis; 1-deoxy-D-xylulose 5-phosphate from D-glyceraldehyde 3-phosphate and pyruvate: step 1/1. Its function is as follows. Catalyzes the acyloin condensation reaction between C atoms 2 and 3 of pyruvate and glyceraldehyde 3-phosphate to yield 1-deoxy-D-xylulose-5-phosphate (DXP). This Caulobacter vibrioides (strain NA1000 / CB15N) (Caulobacter crescentus) protein is 1-deoxy-D-xylulose-5-phosphate synthase.